We begin with the raw amino-acid sequence, 342 residues long: Phosphate acyltransferase (342 aa).

This sequence belongs to the PlsX family. As to quaternary structure, homodimer. Probably interacts with PlsY.

It localises to the cytoplasm. It carries out the reaction a fatty acyl-[ACP] + phosphate = an acyl phosphate + holo-[ACP]. The protein operates within lipid metabolism; phospholipid metabolism. Functionally, catalyzes the reversible formation of acyl-phosphate (acyl-PO(4)) from acyl-[acyl-carrier-protein] (acyl-ACP). This enzyme utilizes acyl-ACP as fatty acyl donor, but not acyl-CoA. This chain is Phosphate acyltransferase, found in Actinobacillus succinogenes (strain ATCC 55618 / DSM 22257 / CCUG 43843 / 130Z).